The sequence spans 415 residues: Erythronolide mycarosyltransferase (415 aa).

This sequence belongs to the glycosyltransferase 28 family.

The enzyme catalyses dTDP-beta-L-mycarose + erythronolide B = 3-O-alpha-L-mycarosylerythronolide B + dTDP + H(+). Its function is as follows. Involved in the biosynthesis of the macrolide antibiotic erythromycin. Catalyzes the reversible transfer of mycarosyl from dTDP-beta-L-mycarose to erythronolide B to yield 3-alpha-L-mycarosylerythronolide B. It can also use TDP-beta-L-cladinose. The protein is Erythronolide mycarosyltransferase of Saccharopolyspora erythraea (Streptomyces erythraeus).